The following is a 180-amino-acid chain: Ribulose bisphosphate carboxylase small subunit, chloroplastic 2 (180 aa).

The transit peptide at 1 to 56 (MASSVLSSAAVATVSRTPAQASMVAPFTGLKSTVGFPATKKNDDITSLASNGGRVQ) directs the protein to the chloroplast.

The protein belongs to the RuBisCO small chain family. As to quaternary structure, heterohexadecamer of 8 large and 8 small subunits.

Its subcellular location is the plastid. The protein localises to the chloroplast. RuBisCO catalyzes two reactions: the carboxylation of D-ribulose 1,5-bisphosphate, the primary event in carbon dioxide fixation, as well as the oxidative fragmentation of the pentose substrate. Both reactions occur simultaneously and in competition at the same active site. Although the small subunit is not catalytic it is essential for maximal activity. In Spinacia oleracea (Spinach), this protein is Ribulose bisphosphate carboxylase small subunit, chloroplastic 2.